We begin with the raw amino-acid sequence, 758 residues long: Vitamin K-dependent gamma-carboxylase (758 aa).

Positions 1–31 are disordered; that stretch reads MAVSARSARSPPDSDKVQKDKAGQTSGRRQG. The residue at position 2 (alanine 2) is an N-acetylalanine. Over 2 to 60 the chain is Cytoplasmic; sequence AVSARSARSPPDSDKVQKDKAGQTSGRRQGSRMGKLLGFEWTDVSSWGKLVTLLNRPTD. Basic and acidic residues predominate over residues 12–22; sequence PDSDKVQKDKA. Residues 61–81 traverse the membrane as a helical segment; it reads PASLAVFRFLFGLMMVLDIPQ. At 82–113 the chain is on the lumenal side; that stretch reads ERGLSSLDRRYLDGLEVCRFPLLDALQPLPLD. Cysteine 99 and cysteine 450 are joined by a disulfide. A helical membrane pass occupies residues 114–134; the sequence is WMYLVYTIMFLGALGMMLGLR. At 135-136 the chain is on the cytoplasmic side; it reads YR. A helical transmembrane segment spans residues 137-157; sequence ISCVLFLLPYWYVFLLDKTSW. Over 158–292 the chain is Lumenal; the sequence is NNHSYLYGLL…VSYFHCMNSQ (135 aa). The helical transmembrane segment at 293–313 threads the bilayer; that stretch reads LFSIGMFPYVMLASSPLFCSP. Over 314 to 361 the chain is Cytoplasmic; sequence EWPRKLVAHCPKRLQELLPLRTAPQPSASCVYKRSRAKGGQKPGLRHR. A helical membrane pass occupies residues 362 to 382; the sequence is LGAAFTLLYLLEQLFLPYSHF. Residues 383 to 758 lie on the Lumenal side of the membrane; it reads LTQGYNNWTN…PNADAVHSEF (376 aa). Residues 727–758 form a disordered region; that stretch reads PFEPVGEPSPSNTDSSNPNPSEPNADAVHSEF. Low complexity predominate over residues 734–750; the sequence is PSPSNTDSSNPNPSEPN.

It belongs to the vitamin K-dependent gamma-carboxylase family. As to quaternary structure, monomer. May interact with CALU.

Its subcellular location is the endoplasmic reticulum membrane. The enzyme catalyses 4-carboxy-L-glutamyl-[protein] + 2,3-epoxyphylloquinone + H2O + H(+) = phylloquinol + L-glutamyl-[protein] + CO2 + O2. Functionally, mediates the vitamin K-dependent carboxylation of glutamate residues to calcium-binding gamma-carboxyglutamate (Gla) residues with the concomitant conversion of the reduced hydroquinone form of vitamin K to vitamin K epoxide. Catalyzes gamma-carboxylation of various proteins, such as blood coagulation factors (F2, F7, F9 and F10), osteocalcin (BGLAP) or matrix Gla protein (MGP). This chain is Vitamin K-dependent gamma-carboxylase (GGCX), found in Delphinapterus leucas (Beluga whale).